The following is an 803-amino-acid chain: Translation initiation factor IF-2 (803 aa).

Disordered regions lie at residues 95-125 (PVVE…EKAE) and 138-178 (EVKE…EREE). Over residues 111–121 (VPLTSDTTNLN) the composition is skewed to polar residues. The segment covering 138-155 (EVKEEAKKTPSEKKETPK) has biased composition (basic and acidic residues). Basic residues predominate over residues 156–167 (KGPRKETRRSRK). Residues 168–178 (PDKEDKWEREE) are compositionally biased toward basic and acidic residues. Positions 302-471 (PRAPVVTIMG…LLQAEVLELK (170 aa)) constitute a tr-type G domain. Positions 311 to 318 (GHVDHGKT) are G1. Residue 311-318 (GHVDHGKT) participates in GTP binding. The G2 stretch occupies residues 336–340 (GITQH). Residues 357 to 360 (DTPG) form a G3 region. GTP contacts are provided by residues 357 to 361 (DTPGH) and 411 to 414 (NKID). A G4 region spans residues 411–414 (NKID). Residues 447 to 449 (SAK) are G5.

This sequence belongs to the TRAFAC class translation factor GTPase superfamily. Classic translation factor GTPase family. IF-2 subfamily.

It localises to the cytoplasm. One of the essential components for the initiation of protein synthesis. Protects formylmethionyl-tRNA from spontaneous hydrolysis and promotes its binding to the 30S ribosomal subunits. Also involved in the hydrolysis of GTP during the formation of the 70S ribosomal complex. This chain is Translation initiation factor IF-2, found in Coxiella burnetii (strain Dugway 5J108-111).